We begin with the raw amino-acid sequence, 436 residues long: MQVSVESTSALERRLTIGVPAERIETEVNKRLQQTARRAKIPGFRPGKVPMSVIRQRYEESARQEALGELIQASFYEAVVEQKLKPAGAPSVEPKVFEKGKDLEYVATFEVYPEFEITGLESIAVERLQAEVAESDVDNMLEILRKQNTHYKQVEREARDGDQLNIDFVGKVDGEAFAGGSAKGTLLVLGSGRMIEGFEAGLVGAKAGEERVLSLTFPADYQNLDLAGKAAEFAVTVNSVSEAELPELNADFFSLFGINESSLEAFRAEVGKNMERELRQAIKSKVKTQVMDGLLAANPVEVPKALIENEVNRLRVQAVQQFGGNIKPEQLPADLFQDQAKRRVTLGLIVAEMVKQFDLKPDESKVKTLIEEIASAYQEPEQVVAWYYGNEQQLSEVRSVVLEEQVVDTVLQKANVTDKAVSYEEAVKPAEAPQAA.

The 86-residue stretch at 161–246 (GDQLNIDFVG…VNSVSEAELP (86 aa)) folds into the PPIase FKBP-type domain.

Belongs to the FKBP-type PPIase family. Tig subfamily.

The protein resides in the cytoplasm. It carries out the reaction [protein]-peptidylproline (omega=180) = [protein]-peptidylproline (omega=0). Functionally, involved in protein export. Acts as a chaperone by maintaining the newly synthesized protein in an open conformation. Functions as a peptidyl-prolyl cis-trans isomerase. The sequence is that of Trigger factor from Azotobacter vinelandii (strain DJ / ATCC BAA-1303).